Consider the following 1300-residue polypeptide: uncharacterized protein (1300 aa).

An N-terminal signal peptide occupies residues 1 to 26 (MGYKLKRWPLVAFTFTGIGLGVVLAA). Cys27 carries the N-palmitoyl cysteine lipid modification. A lipid anchor (S-diacylglycerol cysteine) is attached at Cys27. The segment covering 464–478 (AMAAASTGADSSSGT) has biased composition (low complexity). Disordered regions lie at residues 464–487 (AMAA…SGGN), 620–639 (ASVS…DTQE), 774–797 (DSQK…NDKK), and 1244–1269 (KMSD…SPRT). 2 stretches are compositionally biased toward polar residues: residues 620 to 637 (ASVS…STDT) and 774 to 783 (DSQKSTNTVK). Positions 785–797 (PDIKPTRENNDKK) are enriched in basic and acidic residues. Positions 1257 to 1269 (TIRKPKPHHSPRT) are enriched in basic residues.

It belongs to the MG307/MG309/MG338 family.

Its subcellular location is the cell membrane. This is an uncharacterized protein from Mycoplasma pneumoniae (strain ATCC 29342 / M129 / Subtype 1) (Mycoplasmoides pneumoniae).